The chain runs to 364 residues: Glycerophosphodiester phosphodiesterase (364 aa).

An N-terminal signal peptide occupies residues 1–18; the sequence is MKLKTLALSLLAAGVLAG. Cys19 carries the N-palmitoyl cysteine lipid modification. Cys19 carries S-diacylglycerol cysteine lipidation. One can recognise a GP-PDE domain in the interval 35–360; it reads KIIIAHRGAS…DFPDTGVEFL (326 aa). Catalysis depends on His40, which acts as the Proton acceptor. Ca(2+) contacts are provided by Glu67 and Asp69. The active-site Proton donor is His82. Residue Glu175 coordinates Ca(2+).

It belongs to the glycerophosphoryl diester phosphodiesterase family. Ca(2+) serves as cofactor. Post-translationally, contains both ester- and amide-linked fatty acids.

It localises to the cell outer membrane. The catalysed reaction is a sn-glycero-3-phosphodiester + H2O = an alcohol + sn-glycerol 3-phosphate + H(+). In terms of biological role, glycerophosphodiester phosphodiesterase hydrolyzes glycerophosphodiesters into glycerol-3-phosphate (G3P) and the corresponding alcohol. Has a specific affinity for human immunoglobulin D myeloma protein. This chain is Glycerophosphodiester phosphodiesterase (glpQ), found in Haemophilus influenzae (strain ATCC 51907 / DSM 11121 / KW20 / Rd).